Reading from the N-terminus, the 943-residue chain is Lactoferrin-binding protein A (943 aa).

Positions 1 to 27 (MNKKHGFPLTLTALAIATAFPAYAAQA) are cleaved as a signal peptide. Residues 52–178 (RRSKEATGLG…LGGAVAFRTK (127 aa)) form the TBDR plug domain. Residues 189-943 (SWGIQAKTAY…NFSLALEMKF (755 aa)) enclose the TBDR beta-barrel domain. Positions 926–943 (GRYAAPGRNFSLALEMKF) match the TonB C-terminal box motif.

The protein belongs to the TonB-dependent receptor family.

The protein resides in the cell outer membrane. Unknown. May be an iron-siderophore receptor. This Neisseria meningitidis serogroup B (strain ATCC BAA-335 / MC58) protein is Lactoferrin-binding protein A (lbpA).